The chain runs to 359 residues: Centromere-binding protein 1 (359 aa).

The disordered stretch occupies residues 1-262; that stretch reads MSGKRSYQDD…SHKEVERRRR (262 aa). Over residues 55–78 the composition is skewed to basic and acidic residues; it reads KENKENRDGDKVGDDEHDVVKGES. Residues 120-161 are compositionally biased toward acidic residues; it reads GDEDEDEDEEEEEDEDDHVDIDDVDKDPDAVIDEDDDEEDED. Basic and acidic residues predominate over residues 249–259; it reads QRKESHKEVER. In terms of domain architecture, bHLH spans 249–297; that stretch reads QRKESHKEVERRRRQNINTAIEKLSDLLPVKETSKAAILSRAAEYIQKM.

As to quaternary structure, binds DNA as a dimer.

Its subcellular location is the nucleus. It is found in the chromosome. The protein resides in the centromere. Its function is as follows. Required for chromosome stability and methionine prototrophy. It is involved in chromosomal segregation. Binds to a highly conserved DNA sequence (5'-RTCACRTG-3'), called CDEI, found in centromeres and in several promoters. The chain is Centromere-binding protein 1 (CBF1) from Kluyveromyces lactis (strain ATCC 8585 / CBS 2359 / DSM 70799 / NBRC 1267 / NRRL Y-1140 / WM37) (Yeast).